Consider the following 468-residue polypeptide: ATP synthase subunit beta (468 aa).

156-163 (GGAGVGKT) lines the ATP pocket.

This sequence belongs to the ATPase alpha/beta chains family. In terms of assembly, F-type ATPases have 2 components, CF(1) - the catalytic core - and CF(0) - the membrane proton channel. CF(1) has five subunits: alpha(3), beta(3), gamma(1), delta(1), epsilon(1). CF(0) has three main subunits: a(1), b(2) and c(9-12). The alpha and beta chains form an alternating ring which encloses part of the gamma chain. CF(1) is attached to CF(0) by a central stalk formed by the gamma and epsilon chains, while a peripheral stalk is formed by the delta and b chains.

The protein resides in the cell inner membrane. It carries out the reaction ATP + H2O + 4 H(+)(in) = ADP + phosphate + 5 H(+)(out). Functionally, produces ATP from ADP in the presence of a proton gradient across the membrane. The catalytic sites are hosted primarily by the beta subunits. The chain is ATP synthase subunit beta from Sulfurimonas denitrificans (strain ATCC 33889 / DSM 1251) (Thiomicrospira denitrificans (strain ATCC 33889 / DSM 1251)).